Reading from the N-terminus, the 401-residue chain is Phosphoglycerate kinase (401 aa).

Substrate contacts are provided by residues 20–22 (DFN), R35, 58–61 (HLGR), R117, and R154. Residues K204, G298, E329, and 358 to 361 (GGDS) contribute to the ATP site.

Belongs to the phosphoglycerate kinase family. In terms of assembly, monomer.

Its subcellular location is the cytoplasm. It carries out the reaction (2R)-3-phosphoglycerate + ATP = (2R)-3-phospho-glyceroyl phosphate + ADP. The protein operates within carbohydrate degradation; glycolysis; pyruvate from D-glyceraldehyde 3-phosphate: step 2/5. The polypeptide is Phosphoglycerate kinase (Bifidobacterium longum subsp. infantis (strain ATCC 15697 / DSM 20088 / JCM 1222 / NCTC 11817 / S12)).